The following is a 174-amino-acid chain: uncharacterized protein (174 aa).

2 stretches are compositionally biased toward basic and acidic residues: residues 1-31 (MDKHGVKTPLWKKETEELRAEDAEQEEGKEG) and 52-67 (EPPRVAEEGEGRERRS). A disordered region spans residues 1 to 69 (MDKHGVKTPL…GEGRERRSVS (69 aa)).

This is an uncharacterized protein from Homo sapiens (Human).